A 699-amino-acid polypeptide reads, in one-letter code: Polyribonucleotide nucleotidyltransferase (699 aa).

2 residues coordinate Mg(2+): D485 and D491. The region spanning 552-611 (PRITTIKINPEKIRDVIGKGGAVIRALTEETGTTIELEDDGTVRIASSNGEATKEAIRRI) is the KH domain. In terms of domain architecture, S1 motif spans 621–689 (GRIYNGKVIR…RQGRVRLSIK (69 aa)).

The protein belongs to the polyribonucleotide nucleotidyltransferase family. In terms of assembly, component of the RNA degradosome, which is a multiprotein complex involved in RNA processing and mRNA degradation. Requires Mg(2+) as cofactor.

It localises to the cytoplasm. The catalysed reaction is RNA(n+1) + phosphate = RNA(n) + a ribonucleoside 5'-diphosphate. Functionally, involved in mRNA degradation. Catalyzes the phosphorolysis of single-stranded polyribonucleotides processively in the 3'- to 5'-direction. This Shewanella sp. (strain W3-18-1) protein is Polyribonucleotide nucleotidyltransferase.